A 140-amino-acid chain; its full sequence is Transcription antitermination protein NusB (140 aa).

The protein belongs to the NusB family.

Its function is as follows. Involved in transcription antitermination. Required for transcription of ribosomal RNA (rRNA) genes. Binds specifically to the boxA antiterminator sequence of the ribosomal RNA (rrn) operons. The polypeptide is Transcription antitermination protein NusB (Streptococcus pneumoniae (strain JJA)).